Consider the following 666-residue polypeptide: Asperfuranone cluster transcription factor afoA (666 aa).

Positions Cys16–Cys43 form a DNA-binding region, zn(2)-C6 fungal-type. Disordered regions lie at residues Leu184–Arg206 and Ala347–Ala373. Residues Leu353–Ser369 are compositionally biased toward low complexity.

It is found in the nucleus. Its function is as follows. Transcription factor that regulates the expression of the gene cluster that mediates the biosynthesis of asperfuranone, a probable antitumor agent. The sequence is that of Asperfuranone cluster transcription factor afoA from Emericella nidulans (strain FGSC A4 / ATCC 38163 / CBS 112.46 / NRRL 194 / M139) (Aspergillus nidulans).